Here is a 425-residue protein sequence, read N- to C-terminus: Serine--tRNA ligase (425 aa).

Position 228 to 230 (228 to 230) interacts with L-serine; sequence TSE. 259–261 provides a ligand contact to ATP; the sequence is RSE. E282 contributes to the L-serine binding site. An ATP-binding site is contributed by 346-349; that stretch reads EISS. S384 is a binding site for L-serine.

Belongs to the class-II aminoacyl-tRNA synthetase family. Type-1 seryl-tRNA synthetase subfamily. In terms of assembly, homodimer. The tRNA molecule binds across the dimer.

Its subcellular location is the cytoplasm. It carries out the reaction tRNA(Ser) + L-serine + ATP = L-seryl-tRNA(Ser) + AMP + diphosphate + H(+). The catalysed reaction is tRNA(Sec) + L-serine + ATP = L-seryl-tRNA(Sec) + AMP + diphosphate + H(+). It participates in aminoacyl-tRNA biosynthesis; selenocysteinyl-tRNA(Sec) biosynthesis; L-seryl-tRNA(Sec) from L-serine and tRNA(Sec): step 1/1. Its function is as follows. Catalyzes the attachment of serine to tRNA(Ser). Is also able to aminoacylate tRNA(Sec) with serine, to form the misacylated tRNA L-seryl-tRNA(Sec), which will be further converted into selenocysteinyl-tRNA(Sec). This Ehrlichia ruminantium (strain Gardel) protein is Serine--tRNA ligase.